The sequence spans 885 residues: DNA mismatch repair protein MutS (885 aa).

Positions Met-1–Arg-67 are disordered. Residues Ser-26–Pro-36 are compositionally biased toward basic and acidic residues. Gly-691–Ser-698 lines the ATP pocket.

This sequence belongs to the DNA mismatch repair MutS family.

Its function is as follows. This protein is involved in the repair of mismatches in DNA. It is possible that it carries out the mismatch recognition step. This protein has a weak ATPase activity. The sequence is that of DNA mismatch repair protein MutS from Synechococcus sp. (strain RCC307).